The chain runs to 123 residues: UPF0102 protein Fjoh_1217 (123 aa).

This sequence belongs to the UPF0102 family.

The protein is UPF0102 protein Fjoh_1217 of Flavobacterium johnsoniae (strain ATCC 17061 / DSM 2064 / JCM 8514 / BCRC 14874 / CCUG 350202 / NBRC 14942 / NCIMB 11054 / UW101) (Cytophaga johnsonae).